Here is a 144-residue protein sequence, read N- to C-terminus: Maximins 7/H6 (144 aa).

A signal peptide spans 1-18 (MNFKYIVAVSFLIASAYA). The propeptide occupies 19–43 (RSEENDEQSLSQRDILEEESLREIR). Residue Asn70 is modified to Asparagine amide. The propeptide occupies 74–123 (TAEDHEVMKRLEAVMRDLDSLDYPEEAAERETRGFNQEEIANLFTKKEKR). Leu143 carries the leucine amide modification.

Belongs to the bombinin family. As to expression, expressed by the skin glands.

Its subcellular location is the secreted. Functionally, maximin-7 shows antimicrobial activity against bacteria and against the fungus C.albicans. It has little hemolytic activity. In terms of biological role, maximin-H6 shows antimicrobial activity against bacteria and against the fungus C.albicans. Shows strong hemolytic activity. The protein is Maximins 7/H6 of Bombina maxima (Giant fire-bellied toad).